Consider the following 124-residue polypeptide: Fluoride-specific ion channel FluC (124 aa).

Helical transmembrane passes span 6 to 26 (LLIG…SGIV), 37 to 57 (LAVN…SLFA), 69 to 89 (TGFC…FVLV), and 92 to 112 (GLLF…LIMV). Na(+) is bound by residues Gly-73 and Thr-76.

It belongs to the fluoride channel Fluc/FEX (TC 1.A.43) family.

It localises to the cell membrane. The enzyme catalyses fluoride(in) = fluoride(out). Its activity is regulated as follows. Na(+) is not transported, but it plays an essential structural role and its presence is essential for fluoride channel function. Fluoride-specific ion channel. Important for reducing fluoride concentration in the cell, thus reducing its toxicity. This is Fluoride-specific ion channel FluC from Methanocaldococcus jannaschii (strain ATCC 43067 / DSM 2661 / JAL-1 / JCM 10045 / NBRC 100440) (Methanococcus jannaschii).